A 335-amino-acid polypeptide reads, in one-letter code: Biotin synthase (335 aa).

Positions 46-274 (YKVQLASLFS…KSKIRLSAGR (229 aa)) constitute a Radical SAM core domain. Residues C61, C65, and C68 each contribute to the [4Fe-4S] cluster site. C105, C137, C197, and R269 together coordinate [2Fe-2S] cluster.

The protein belongs to the radical SAM superfamily. Biotin synthase family. As to quaternary structure, homodimer. [4Fe-4S] cluster is required as a cofactor. It depends on [2Fe-2S] cluster as a cofactor.

The catalysed reaction is (4R,5S)-dethiobiotin + (sulfur carrier)-SH + 2 reduced [2Fe-2S]-[ferredoxin] + 2 S-adenosyl-L-methionine = (sulfur carrier)-H + biotin + 2 5'-deoxyadenosine + 2 L-methionine + 2 oxidized [2Fe-2S]-[ferredoxin]. It functions in the pathway cofactor biosynthesis; biotin biosynthesis; biotin from 7,8-diaminononanoate: step 2/2. Catalyzes the conversion of dethiobiotin (DTB) to biotin by the insertion of a sulfur atom into dethiobiotin via a radical-based mechanism. This is Biotin synthase from Prochlorococcus marinus (strain MIT 9515).